We begin with the raw amino-acid sequence, 421 residues long: D-amino acid dehydrogenase (421 aa).

3–17 serves as a coordination point for FAD; it reads VLILGSGVIGVTSAY.

It belongs to the DadA oxidoreductase family. The cofactor is FAD.

The catalysed reaction is a D-alpha-amino acid + A + H2O = a 2-oxocarboxylate + AH2 + NH4(+). In terms of biological role, oxidative deamination of D-amino acids. The chain is D-amino acid dehydrogenase from Bradyrhizobium diazoefficiens (strain JCM 10833 / BCRC 13528 / IAM 13628 / NBRC 14792 / USDA 110).